A 267-amino-acid chain; its full sequence is Glucosamine-6-phosphate deaminase (267 aa).

The active-site Proton acceptor; for enolization step is the aspartate 72. The active-site For ring-opening step is aspartate 141. The Proton acceptor; for ring-opening step role is filled by histidine 143. Residue glutamate 148 is the For ring-opening step of the active site.

The protein belongs to the glucosamine/galactosamine-6-phosphate isomerase family. NagB subfamily. In terms of assembly, homohexamer.

It catalyses the reaction alpha-D-glucosamine 6-phosphate + H2O = beta-D-fructose 6-phosphate + NH4(+). It participates in amino-sugar metabolism; N-acetylneuraminate degradation; D-fructose 6-phosphate from N-acetylneuraminate: step 5/5. With respect to regulation, allosterically activated by N-acetylglucosamine 6-phosphate (GlcNAc6P). Catalyzes the reversible isomerization-deamination of glucosamine 6-phosphate (GlcN6P) to form fructose 6-phosphate (Fru6P) and ammonium ion. This is Glucosamine-6-phosphate deaminase from Haemophilus ducreyi (strain 35000HP / ATCC 700724).